We begin with the raw amino-acid sequence, 98 residues long: NADH-ubiquinone oxidoreductase chain 4L (98 aa).

3 consecutive transmembrane segments (helical) span residues 1-21 (MTHI…GLTF), 26-46 (LLSA…ALAM), and 59-79 (APLL…SLLV).

This sequence belongs to the complex I subunit 4L family.

Its subcellular location is the mitochondrion membrane. It catalyses the reaction a ubiquinone + NADH + 5 H(+)(in) = a ubiquinol + NAD(+) + 4 H(+)(out). Its function is as follows. Core subunit of the mitochondrial membrane respiratory chain NADH dehydrogenase (Complex I) which catalyzes electron transfer from NADH through the respiratory chain, using ubiquinone as an electron acceptor. Part of the enzyme membrane arm which is embedded in the lipid bilayer and involved in proton translocation. The sequence is that of NADH-ubiquinone oxidoreductase chain 4L (MT-ND4L) from Polypterus ornatipinnis (Ornate bichir).